We begin with the raw amino-acid sequence, 300 residues long: Tetrahydromethanopterin S-methyltransferase subunit E (300 aa).

The next 6 helical transmembrane spans lie at 62–82 (PVSY…LMGM), 86–106 (PILA…AYSV), 135–155 (PIVG…YLAV), 158–178 (LGNP…VGAI), 226–246 (YFCS…IIFL), and 261–281 (LITK…TTLL).

The protein belongs to the MtrE family. In terms of assembly, the complex is composed of 8 subunits; MtrA, MtrB, MtrC, MtrD, MtrE, MtrF, MtrG and MtrH.

It is found in the cell membrane. The catalysed reaction is 5-methyl-5,6,7,8-tetrahydromethanopterin + coenzyme M + 2 Na(+)(in) = 5,6,7,8-tetrahydromethanopterin + methyl-coenzyme M + 2 Na(+)(out). The protein operates within one-carbon metabolism; methanogenesis from CO(2); methyl-coenzyme M from 5,10-methylene-5,6,7,8-tetrahydromethanopterin: step 2/2. In terms of biological role, part of a complex that catalyzes the formation of methyl-coenzyme M and tetrahydromethanopterin from coenzyme M and methyl-tetrahydromethanopterin. This is an energy-conserving, sodium-ion translocating step. This is Tetrahydromethanopterin S-methyltransferase subunit E from Methanococcus aeolicus (strain ATCC BAA-1280 / DSM 17508 / OCM 812 / Nankai-3).